We begin with the raw amino-acid sequence, 310 residues long: Carbamate kinase (310 aa).

The protein belongs to the carbamate kinase family.

It is found in the cytoplasm. The catalysed reaction is hydrogencarbonate + NH4(+) + ATP = carbamoyl phosphate + ADP + H2O + H(+). It functions in the pathway metabolic intermediate metabolism; carbamoyl phosphate degradation; CO(2) and NH(3) from carbamoyl phosphate: step 1/1. This Staphylococcus epidermidis (strain ATCC 35984 / DSM 28319 / BCRC 17069 / CCUG 31568 / BM 3577 / RP62A) protein is Carbamate kinase (arcC).